Here is a 352-residue protein sequence, read N- to C-terminus: UDP-3-O-acylglucosamine N-acyltransferase (352 aa).

His-257 acts as the Proton acceptor in catalysis.

Belongs to the transferase hexapeptide repeat family. LpxD subfamily. In terms of assembly, homotrimer.

The catalysed reaction is a UDP-3-O-[(3R)-3-hydroxyacyl]-alpha-D-glucosamine + a (3R)-hydroxyacyl-[ACP] = a UDP-2-N,3-O-bis[(3R)-3-hydroxyacyl]-alpha-D-glucosamine + holo-[ACP] + H(+). It functions in the pathway bacterial outer membrane biogenesis; LPS lipid A biosynthesis. Functionally, catalyzes the N-acylation of UDP-3-O-acylglucosamine using 3-hydroxyacyl-ACP as the acyl donor. Is involved in the biosynthesis of lipid A, a phosphorylated glycolipid that anchors the lipopolysaccharide to the outer membrane of the cell. The chain is UDP-3-O-acylglucosamine N-acyltransferase from Methylobacterium sp. (strain 4-46).